The following is a 128-amino-acid chain: Large ribosomal subunit protein bL17 (128 aa).

It belongs to the bacterial ribosomal protein bL17 family. Part of the 50S ribosomal subunit. Contacts protein L32.

In Streptococcus pyogenes serotype M49 (strain NZ131), this protein is Large ribosomal subunit protein bL17.